The following is a 345-amino-acid chain: Lysine-specific demethylase JMJ32 (345 aa).

The JmjC domain maps to 122 to 315 (GYLQQQNDCF…IKYAYFNFLQ (194 aa)). 3 residues coordinate Fe cation: His174, Asp176, and His281.

It belongs to the JARID1 histone demethylase family. Requires Fe(2+) as cofactor. Expressed ubiquitously including in vasculatures, leaves, siliques, roots and inflorescences. Present in the root meristem. Accumulates in cotyledons and root tips of young seedlings.

The protein resides in the nucleus. The protein localises to the cytoplasm. It localises to the endoplasmic reticulum. It catalyses the reaction N(6),N(6),N(6)-trimethyl-L-lysyl(27)-[histone H3] + 2-oxoglutarate + O2 = N(6),N(6)-dimethyl-L-lysyl(27)-[histone H3] + formaldehyde + succinate + CO2. The catalysed reaction is N(6),N(6)-dimethyl-L-lysyl(27)-[histone H3] + 2-oxoglutarate + O2 = N(6)-methyl-L-lysyl(27)-[histone H3] + formaldehyde + succinate + CO2. The enzyme catalyses N(6),N(6),N(6)-trimethyl-L-lysyl(27)-[histone H3] + 2 2-oxoglutarate + 2 O2 = N(6)-methyl-L-lysyl(27)-[histone H3] + 2 formaldehyde + 2 succinate + 2 CO2. In terms of biological role, histone demethylase that demethylates 'Lys-27' (H3K27me) of histone H3 with a specific activity for H3K27me3 and H3K27me2, and involved in the regulation of gene expression. No activity on H3K27me1. Together with JMJ30, regulates the flowering-repressor FLOWERING LOCUS C (FLC) locus by removing the repressive histone modification H3 lysine 27 trimethylation (H3K27me3), especially at elevated temperatures (e.g. 29 degrees Celsius), thus preventing extreme precocious flowering. JMJ30 and JMJ32 are regulators involved in the integration of abscisic acid (ABA) and brassinosteroids (BR) signaling pathways. Together with JMJ30, controls ABA-mediated growth arrest during the post-germination stage in unfavorable conditions, and responses to ABA during root development, via the removal of repressive histone mark (H3K27me3) from the SnRK2.8 promoter, thus promoting SnRK2.8 expression and subsequent kinase-dependent ABI3 activation. In addition, removes the repressive histone marks (H3K27me3) from the BZR1 locus in response to stress and ABA, thus activating the BR signaling pathway which, in turn, inhibits the ABA signaling pathway. The polypeptide is Lysine-specific demethylase JMJ32 (Arabidopsis thaliana (Mouse-ear cress)).